The following is a 100-amino-acid chain: uncharacterized protein (100 aa).

It is found in the secreted. This is an uncharacterized protein from Mycobacterium leprae (strain TN).